We begin with the raw amino-acid sequence, 892 residues long: MSEIDYKETLNMPKTDFEMRANLTTKEPLFREKWEKDNLYARVLEKNKNNTPFVLHDGPPYANGSIHIGHALNKILKDIIVRYKSMCGFYSPYVPGWDTHGLPIELKMLTDAKINYKVISPIELRKRASEYADIQIENQISQFKSLQLLTDFKKIYKTKEPKFEAAQLKLFKKMVLDGLVYKGLKPVYWSPSSQTALAEAEVEYHDVDSPSIYVALEIIDQNGSQKVKNGDKLVIWTTTPWTLLANAAVAIGENFVYCRVEHNNQGYIVAKELANKFIEISKLDNAQISVDFNANELIGIKYKSVLNDLVCPVVIGHHVSLESGTGLVHIAPLFGEDDFQIGTANSLEMIMHVEDDGVLNDAAGKYKGIFYEKANAQIFDKLTSKSALLAKGTIRHSYPHDWRTHKPILFRGTPQWFVSIDKIRQQLLNELESINTYPEWAKKRLVNMISERKDWTISRQRTWGVPIIIFYDKDGKPVINSAIFDYVIDLVEKYGTDIWWEKEADELLPEEFRSNGYTKEMDIMDVWFDSGTTSLAVEIDEKLKPPYDLYLEGSDQYRGWFNSSLINSVAYTHKSPYKQIVSHGFVLDSKGEKMSKSKGNVVDPLKVIKKYGADILRLWVANAEYTNDVNISDEIINQNSEIYRKIRNTIKFLLGNLNGYEYDESVKRTGVHQYIYNELESIKEKVYKAYDEYNFSSVIKTINKYVVELSSFYLNITKDILYVHEFDSNERMMTLANFYDITNFLIKAIAPIIPTTAEDAYMHFYKKNKLESIHLENFDIVKPYDSNVLKEWEEFFSLKDEVNLLLENAIKSGLIKRTNEAKVTIKNPSEVIKGYDLKQLLMVGAIEFGNVSKVESFMSEKCNRCWNHFSPAQIKDNLCPLCYKIVQKVNGK.

Positions P60–H70 match the 'HIGH' region motif. E552 lines the L-isoleucyl-5'-AMP pocket. Residues K593–S597 carry the 'KMSKS' region motif. Position 596 (K596) interacts with ATP. Positions 862, 865, 879, and 882 each coordinate Zn(2+).

The protein belongs to the class-I aminoacyl-tRNA synthetase family. IleS type 1 subfamily. As to quaternary structure, monomer. Requires Zn(2+) as cofactor.

The protein resides in the cytoplasm. The enzyme catalyses tRNA(Ile) + L-isoleucine + ATP = L-isoleucyl-tRNA(Ile) + AMP + diphosphate. In terms of biological role, catalyzes the attachment of isoleucine to tRNA(Ile). As IleRS can inadvertently accommodate and process structurally similar amino acids such as valine, to avoid such errors it has two additional distinct tRNA(Ile)-dependent editing activities. One activity is designated as 'pretransfer' editing and involves the hydrolysis of activated Val-AMP. The other activity is designated 'posttransfer' editing and involves deacylation of mischarged Val-tRNA(Ile). The protein is Isoleucine--tRNA ligase of Mycoplasmopsis agalactiae (strain NCTC 10123 / CIP 59.7 / PG2) (Mycoplasma agalactiae).